The primary structure comprises 479 residues: Proline--tRNA ligase (479 aa).

The protein belongs to the class-II aminoacyl-tRNA synthetase family. ProS type 3 subfamily. In terms of assembly, homodimer.

It is found in the cytoplasm. It carries out the reaction tRNA(Pro) + L-proline + ATP = L-prolyl-tRNA(Pro) + AMP + diphosphate. Its function is as follows. Catalyzes the attachment of proline to tRNA(Pro) in a two-step reaction: proline is first activated by ATP to form Pro-AMP and then transferred to the acceptor end of tRNA(Pro). The sequence is that of Proline--tRNA ligase from Mesomycoplasma hyopneumoniae (strain 7448) (Mycoplasma hyopneumoniae).